We begin with the raw amino-acid sequence, 805 residues long: Translation initiation factor IF-2 (805 aa).

Disordered regions lie at residues 68-89 and 141-215; these read VVTEQAQAPAEVEEKKEEEKKE and KEKE…KEKK. Basic and acidic residues predominate over residues 79-89; it reads VEEKKEEEKKE. In terms of domain architecture, tr-type G spans 306–474; sequence PRPPIVVVMG…MILLLADILE (169 aa). Residues 315-322 form a G1 region; the sequence is GHVDHGKT. 315 to 322 contributes to the GTP binding site; the sequence is GHVDHGKT. The segment at 340–344 is G2; sequence GITQH. The segment at 362-365 is G3; the sequence is DTPG. Residues 362-366 and 416-419 each bind GTP; these read DTPGH and NKID. The G4 stretch occupies residues 416 to 419; sequence NKID. The interval 452–454 is G5; sequence SAK.

Belongs to the TRAFAC class translation factor GTPase superfamily. Classic translation factor GTPase family. IF-2 subfamily.

It localises to the cytoplasm. One of the essential components for the initiation of protein synthesis. Protects formylmethionyl-tRNA from spontaneous hydrolysis and promotes its binding to the 30S ribosomal subunits. Also involved in the hydrolysis of GTP during the formation of the 70S ribosomal complex. The sequence is that of Translation initiation factor IF-2 (infB) from Aquifex aeolicus (strain VF5).